A 333-amino-acid chain; its full sequence is MASSSSTSTGDGYNEPWVEKYRPSKVVDIVGNEDAVSRLQVIARDGNMPNLILSGPPGTGKTTSILALAHELLGTNYKEAVLELNASDDRGIDVVRNKIKMFAQKKVTLPPGRHKVVILDEADSMTSGAQQALRRTIEIYSNSTRFALACNTSAKIIEPIQSRCALVRFSRLSDQQILGRLLVVVAAEKVPYVPEGLEAIIFTADGDMRQALNNLQATFSGFSFVNQENVFKVCDQPHPLHVKNIVRNVLESKFDIACDGLKQLYDLGYSPTDIITTLFRIIKNYDMAEYLKLEFMKETGFAHMRICDGVGSYLQLCGLLAKLSIVRETAKAP.

The residue at position 2 (Ala2) is an N-acetylalanine. 55 to 62 (GPPGTGKT) contacts ATP.

Belongs to the activator 1 small subunits family. As to quaternary structure, heterotetramer of subunits RFC2, RFC3, RFC4 and RFC5 that can form a complex with RFC1.

Its subcellular location is the nucleus. May be involved in DNA replication and thus regulate cell proliferation. The polypeptide is Replication factor C subunit 2 (RFC2) (Arabidopsis thaliana (Mouse-ear cress)).